Here is a 391-residue protein sequence, read N- to C-terminus: Pepsin B (391 aa).

Residues 1 to 16 form the signal peptide; the sequence is MKCLILALICLQLSEG. The propeptide at 17–60 is activation peptide; it reads LVVRQILHKGKSIRERMEENGVLEDFLRYNKKADPAAKFLFNKD. One can recognise a Peptidase A1 domain in the interval 75–388; sequence YFGEISIGTP…DMANNRVGFA (314 aa). D93 is a catalytic residue. 2 cysteine pairs are disulfide-bonded: C106-C111 and C270-C274. D279 is an active-site residue. C313 and C346 are disulfide-bonded.

It belongs to the peptidase A1 family.

The protein resides in the secreted. The catalysed reaction is Degradation of gelatin, little activity on hemoglobin. Specificity on B chain of insulin more restricted than that of pepsin A. Does not cleave 1-Phe-|-Val-2, 4-Gln-|-His-5 or 23-Gly-|-Phe-24.. Hydrolyzes various peptides including beta-endorphin, insulin B chain, dynorphin A, and neurokinin A, with high specificity for the cleavage of the Phe-Xaa bonds. The chain is Pepsin B from Monodelphis domestica (Gray short-tailed opossum).